The following is a 331-amino-acid chain: Acyl-CoA desaturase 1 (331 aa).

Over 1–46 the chain is Cytoplasmic; sequence MTEVDDGCGGRLRGSVLLEDECDLKQECETPTHSLVQGRDPPVVVV. Residues 47 to 67 traverse the membrane as a helical segment; sequence WRNVVLMSVLHTAAVYGLVLL. Asn49 is a binding site for substrate. Residues 68–71 lie on the Lumenal side of the membrane; that stretch reads PSAS. The helical transmembrane segment at 72 to 90 threads the bilayer; it reads AYTLLAFCFVSSALGITAG. Over 91-189 the chain is Cytoplasmic; sequence AHRLWSHRSY…DRVVMFQRRF (99 aa). 2 residues coordinate Fe cation: His92 and His97. The Histidine box-1 motif lies at 92–97; it reads HRLWSH. Residues Asn120, Arg127, and Asp128 each coordinate substrate. Fe cation-binding residues include His129, His132, and His133. A Histidine box-2 motif is present at residues 129–133; it reads HRVHH. Lys161 contacts substrate. The chain crosses the membrane as a helical span at residues 190–209; sequence YKHSVVVMCFLIPAMLPWFL. Over 210–213 the chain is Lumenal; the sequence is WAES. Residues 214–235 form a helical membrane-spanning segment; the sequence is LWVGYFVPVLLRYALVLNATWL. Trp234 is a binding site for substrate. The Cytoplasmic portion of the chain corresponds to 236 to 331; sequence VNSAAHMWGN…RTGDGSHRSG (96 aa). 4 residues coordinate Fe cation: His241, His270, His273, and His274. Residues 270–274 carry the Histidine box-3 motif; the sequence is HNYHH.

Belongs to the fatty acid desaturase type 1 family. Fe(2+) is required as a cofactor. In terms of tissue distribution, expression is highest in liver, followed by brain and intestine, and lowest in spleen. Also expressed in heart, gill and muscle.

It is found in the endoplasmic reticulum membrane. It catalyses the reaction octadecanoyl-CoA + 2 Fe(II)-[cytochrome b5] + O2 + 2 H(+) = (9Z)-octadecenoyl-CoA + 2 Fe(III)-[cytochrome b5] + 2 H2O. Its function is as follows. Stearoyl-CoA desaturase that utilizes O(2) and electrons from reduced cytochrome b5 to introduce the first double bond into saturated fatty acyl-CoA substrates. Catalyzes the insertion of a cis double bond at the delta-9 position into fatty acyl-CoA substrates including palmitoyl-CoA and stearoyl-CoA. Contributes to the biosynthesis of membrane phospholipids, cholesterol esters and triglycerides. The polypeptide is Acyl-CoA desaturase 1 (Tachysurus fulvidraco (Yellow catfish)).